The following is an 85-amino-acid chain: Conotoxin Cap15a (85 aa).

The N-terminal stretch at 1-23 (MEKLTFLILVATVLLTIHVLVQS) is a signal peptide. A propeptide spanning residues 24 to 49 (VGDKHLKRRPKQYATKHLSALMRGHR) is cleaved from the precursor. Glutamine 50 carries the pyrrolidone carboxylic acid modification.

It belongs to the conotoxin O2 superfamily. Post-translationally, contains 4 disulfide bonds. In terms of tissue distribution, expressed by the venom duct.

It localises to the secreted. In Conus capitaneus (Captain cone), this protein is Conotoxin Cap15a.